A 316-amino-acid polypeptide reads, in one-letter code: Oligopeptide transport system permease protein AppB (316 aa).

A run of 6 helical transmembrane segments spans residues 10-30 (LMSIPILLGITILSFVIMKAA), 100-120 (LLLMLVSTILALMISIPFGVL), 138-158 (FIGLAIPNFWFGLILIMVLSV), 177-197 (IFDRIHHLILPAFVLATADMA), 240-260 (LPVITIFGLMIPSFIGGSVVV), and 290-310 (VISAVLVVVGNLIADILYAIV). Residues 96-303 (LPNTLLLMLV…VLVVVGNLIA (208 aa)) form the ABC transmembrane type-1 domain.

It belongs to the binding-protein-dependent transport system permease family. OppBC subfamily.

The protein localises to the cell membrane. In terms of biological role, this protein is a component of an oligopeptide permease, a binding protein-dependent transport system. This APP system can completely substitute for the OPP system in both sporulation and genetic competence, though, unlike OPP, is incapable of transporting tripeptides. Probably responsible for the translocation of the substrate across the membrane. The protein is Oligopeptide transport system permease protein AppB (appB) of Bacillus subtilis (strain 168).